Consider the following 105-residue polypeptide: Guanyl-specific ribonuclease Ms (105 aa).

2 disulfides stabilise this stretch: C3–C11 and C7–C102. The active site involves H39. E57 (proton acceptor) is an active-site residue. Residue H91 is the Proton donor of the active site.

Belongs to the ribonuclease N1/T1 family.

It carries out the reaction [RNA] containing guanosine + H2O = an [RNA fragment]-3'-guanosine-3'-phosphate + a 5'-hydroxy-ribonucleotide-3'-[RNA fragment].. The protein is Guanyl-specific ribonuclease Ms of Aspergillus phoenicis (Aspergillus saitoi).